Consider the following 953-residue polypeptide: Probable LRR receptor-like serine/threonine-protein kinase At1g53420 (953 aa).

A signal peptide spans methionine 1–alanine 22. Over serine 23–threonine 566 the chain is Extracellular. LRR repeat units follow at residues tryptophan 63–leucine 86, leucine 88–leucine 110, proline 111–asparagine 132, threonine 135–proline 158, asparagine 159–threonine 182, and threonine 183–tryptophan 205. 2 N-linked (GlcNAc...) asparagine glycosylation sites follow: asparagine 100 and asparagine 132. Residues asparagine 265, asparagine 315, asparagine 335, asparagine 378, and asparagine 423 are each glycosylated (N-linked (GlcNAc...) asparagine). A helical transmembrane segment spans residues leucine 567–tryptophan 587. Over lysine 588–histidine 953 the chain is Cytoplasmic. Residues phenylalanine 624–valine 901 form the Protein kinase domain. ATP contacts are provided by residues isoleucine 630 to valine 638 and lysine 652. Tyrosine 697 is modified (phosphotyrosine). The active-site Proton acceptor is the aspartate 750. Residue serine 783 is modified to Phosphoserine. Phosphothreonine is present on residues threonine 784 and threonine 789. The residue at position 797 (tyrosine 797) is a Phosphotyrosine.

This sequence belongs to the protein kinase superfamily. Ser/Thr protein kinase family.

The protein localises to the membrane. The enzyme catalyses L-seryl-[protein] + ATP = O-phospho-L-seryl-[protein] + ADP + H(+). It catalyses the reaction L-threonyl-[protein] + ATP = O-phospho-L-threonyl-[protein] + ADP + H(+). The polypeptide is Probable LRR receptor-like serine/threonine-protein kinase At1g53420 (Arabidopsis thaliana (Mouse-ear cress)).